A 516-amino-acid chain; its full sequence is D-alanine--D-alanyl carrier protein ligase (516 aa).

156 to 157 (TS) contributes to the ATP binding site. Residue aspartate 203 coordinates D-alanine. Position 298-303 (298-303 (NAYGPT)) interacts with ATP. Valine 307 contacts D-alanine. ATP contacts are provided by residues aspartate 389, 401–404 (YGGR), and lysine 503. D-alanine is bound at residue lysine 503.

This sequence belongs to the ATP-dependent AMP-binding enzyme family. DltA subfamily.

It localises to the cytoplasm. It catalyses the reaction holo-[D-alanyl-carrier protein] + D-alanine + ATP = D-alanyl-[D-alanyl-carrier protein] + AMP + diphosphate. It functions in the pathway cell wall biogenesis; lipoteichoic acid biosynthesis. In terms of biological role, catalyzes the first step in the D-alanylation of lipoteichoic acid (LTA), the activation of D-alanine and its transfer onto the D-alanyl carrier protein (Dcp) DltC. In an ATP-dependent two-step reaction, forms a high energy D-alanyl-AMP intermediate, followed by transfer of the D-alanyl residue as a thiol ester to the phosphopantheinyl prosthetic group of the Dcp. D-alanylation of LTA plays an important role in modulating the properties of the cell wall in Gram-positive bacteria, influencing the net charge of the cell wall. The polypeptide is D-alanine--D-alanyl carrier protein ligase (Streptococcus pneumoniae serotype 4 (strain ATCC BAA-334 / TIGR4)).